The sequence spans 303 residues: Pseudouridine-5'-phosphate glycosidase (303 aa).

Glu-24 serves as the catalytic Proton donor. The substrate site is built by Lys-85 and Val-105. Asp-137 contacts Mn(2+). 139-141 lines the substrate pocket; sequence SAD. The Nucleophile role is filled by Lys-158.

The protein belongs to the pseudouridine-5'-phosphate glycosidase family. In terms of assembly, homotrimer. The cofactor is Mn(2+).

The catalysed reaction is D-ribose 5-phosphate + uracil = psi-UMP + H2O. Functionally, catalyzes the reversible cleavage of pseudouridine 5'-phosphate (PsiMP) to ribose 5-phosphate and uracil. Functions biologically in the cleavage direction, as part of a pseudouridine degradation pathway. The polypeptide is Pseudouridine-5'-phosphate glycosidase (Herpetosiphon aurantiacus (strain ATCC 23779 / DSM 785 / 114-95)).